The chain runs to 678 residues: MGVHFDDNANTTWEATDPGVSSDCDGQHRVTESIQLQNFSNTDMESMLDEEGRENSKSKWLLLKRKHPIQKFIERVWNGPVEPSDEPPSFPKRWGWLKKIDDFPQTTFKTKIPSKLIRLLLLIVYCCFWMRIFYSLIYPYLIKPPYFHPNDGSEKIPILSLSCNSYLNWEGTNNECGLNAKNCGPLDNKEYMIRCPALCDRGGWTYSAIAVGNRRVKYTGYEIGGGALFSEEDPMVVSYPYRSDSFPCASAVHAGVISPFYGGCTKVSMQGAQNSFPSKKGMYNTGFSVAFNSFFPGSYSFRDIQGGILSGCYDPRAAVVALNMLFGLPIFYLYDSIYGYWINTIVGYWTLVLSLDPPLLTDAHDPASVYELFSVGFQRLLPLCFVLYVVWKSAVKRTLENGSPIAKVILWYPTFWLGISNNVTFDRLPVDRLTTTDLKEQAGALTAVGSIAATILTCAVIQAYSLWKSGRFKKYFKIYICFIGGLIALGSLPGLNLRIHHYILGSILVPGCATRGSSAYLFQGILVGLILSGVARWDFASIVETDTALLRGEAGASLKPPILDFNDDQNHSLSWHLNATDPVIDQIGNIDGFSLLLNDVEVYVGKNETVSIDVLRMENPALAQMMDDALDASNGTIDLYLRVARASVRSPTNRGDYTNAGVLQWPNGMWQKPEPGVS.

Residues 1–26 (MGVHFDDNANTTWEATDPGVSSDCDG) are disordered. Helical transmembrane passes span 119–139 (LLLL…LIYP), 245–265 (SFPC…GGCT), 317–337 (AAVV…YDSI), 340–360 (YWIN…PPLL), 371–391 (ELFS…YVVW), 405–425 (IAKV…NVTF), 443–463 (GALT…VIQA), 475–495 (YFKI…LPGL), and 519–539 (AYLF…RWDF).

It localises to the vacuole membrane. This is an uncharacterized protein from Saccharomyces cerevisiae (strain ATCC 204508 / S288c) (Baker's yeast).